The primary structure comprises 226 residues: ATP synthase subunit a (226 aa).

The next 5 membrane-spanning stretches (helical) occupy residues 18 to 38 (LSLNWLSTFLGLLIIPSTYWL), 74 to 94 (FVSLFSLIMFNNFLGLFPYIF), 100 to 120 (LTLTLTLAFPLWLSFMLYGWI), 162 to 182 (LTANMIAGHLLMTLLGNTGPM), and 187 to 207 (IILSLILITQIALLVLESAVA).

It belongs to the ATPase A chain family. F-type ATPases have 2 components, CF(1) - the catalytic core - and CF(0) - the membrane proton channel. CF(1) has five subunits: alpha(3), beta(3), gamma(1), delta(1), epsilon(1). CF(0) has three main subunits: a, b and c.

It is found in the mitochondrion inner membrane. In terms of biological role, mitochondrial membrane ATP synthase (F(1)F(0) ATP synthase or Complex V) produces ATP from ADP in the presence of a proton gradient across the membrane which is generated by electron transport complexes of the respiratory chain. F-type ATPases consist of two structural domains, F(1) - containing the extramembraneous catalytic core and F(0) - containing the membrane proton channel, linked together by a central stalk and a peripheral stalk. During catalysis, ATP synthesis in the catalytic domain of F(1) is coupled via a rotary mechanism of the central stalk subunits to proton translocation. Key component of the proton channel; it may play a direct role in the translocation of protons across the membrane. The chain is ATP synthase subunit a from Aedes aegypti (Yellowfever mosquito).